A 113-amino-acid polypeptide reads, in one-letter code: Beta-microseminoprotein (113 aa).

The first 20 residues, 1-20 (MKARLGSLLVLATLVTASNA), serve as a signal peptide directing secretion. Cystine bridges form between cysteine 22/cysteine 69, cysteine 38/cysteine 61, cysteine 56/cysteine 92, cysteine 59/cysteine 68, and cysteine 83/cysteine 106.

Belongs to the beta-microseminoprotein family. In terms of assembly, homodimer; Interacts with PI16.

It is found in the secreted. The polypeptide is Beta-microseminoprotein (Msmb) (Rattus norvegicus (Rat)).